Consider the following 261-residue polypeptide: Small ribosomal subunit protein uS3 (261 aa).

Positions 39–107 constitute a KH type-2 domain; that stretch reads VREYLKRKLA…PVHVSIEEIR (69 aa). The interval 213–261 is disordered; it reads QPVAEEPAADDRRPRRTPGRPDGDKPRTRTVKKVDGAADPAKRVRKAGA. Basic and acidic residues predominate over residues 221 to 254; it reads ADDRRPRRTPGRPDGDKPRTRTVKKVDGAADPAK.

Belongs to the universal ribosomal protein uS3 family. Part of the 30S ribosomal subunit. Forms a tight complex with proteins S10 and S14.

Functionally, binds the lower part of the 30S subunit head. Binds mRNA in the 70S ribosome, positioning it for translation. This chain is Small ribosomal subunit protein uS3, found in Dechloromonas aromatica (strain RCB).